A 338-amino-acid polypeptide reads, in one-letter code: mRNA decay activator protein ZFP36L1 (338 aa).

Residues 1 to 111 (MTTTLVSATI…QKQPGSGQVN (111 aa)) form a necessary and sufficient for the association with mRNA decay enzymes and mRNA decay activation region. Serine 54 carries the post-translational modification Phosphoserine; by MAPKAPK2. Residues 71–113 (LKGEPAPSLSSRDSRFRDRSFSEGGERLLPTQKQPGSGQVNSS) are disordered. Positions 82 to 96 (RDSRFRDRSFSEGGE) are enriched in basic and acidic residues. At serine 90 the chain carries Phosphoserine; by PKB/AKT1. At serine 92 the chain carries Phosphoserine; by PKB/AKT1 and MAPKAPK2. A compositionally biased stretch (polar residues) spans 101-113 (TQKQPGSGQVNSS). C3H1-type zinc fingers lie at residues 114–142 (RYKT…HGIH) and 152–180 (KYKT…HNAE). The tract at residues 185–338 (LAGGRDLSAD…IFSRLSISDD (154 aa)) is necessary for mRNA decay activation. A Phosphoserine; by PKB/AKT1 and MAPKAPK2 modification is found at serine 203. Positions 273–338 (SPTTFLFRPM…IFSRLSISDD (66 aa)) are disordered. The segment covering 305–318 (YLSSSSSSHSGSDS) has biased composition (low complexity). Serine 318 carries the phosphoserine modification. Residue serine 334 is modified to Phosphoserine; by RPS6KA1.

Associates with the cytoplasmic CCR4-NOT deadenylase and RNA exosome complexes to trigger ARE-containing mRNA deadenylation and decay processes. Interacts with CNOT1. Interacts (via N-terminus) with CNOT6. Interacts with CNOT7; this interaction is inhibited in response to phorbol 12-myristate 13-acetate (PMA) treatment in a p38 MAPK-dependent manner. Interacts with DCP1A. Interacts (via N-terminus) with DCP2. Interacts (via N-terminus) with EXOSC2. Interacts with XRN1. Interacts (via phosphorylated form) with YWHAB; this interaction occurs in a protein kinase AKT1-dependent manner. Interacts (via phosphorylated form) with YWHAZ; this interaction occurs in a p38 MAPK- and AKT-signaling pathways. Post-translationally, phosphorylated. Phosphorylated by RPS6KA1 at Ser-334 upon phorbol 12-myristate 13-acetate (PMA) treatment; this phosphorylation results in dissociation of the CCR4-NOT deadenylase complex and induces p38 MAPK-mediated stabilization of the low-density lipoprotein receptor LDLR mRNA. Phosphorylated by protein kinase AKT1 at Ser-92 and Ser-203 in response to insulin; these phosphorylations stabilize ZFP36L1, increase the association with 14-3-3 proteins and mediate ARE-containing mRNA stabilization. AKT1-mediated phosphorylation at Ser-92 does not impair ARE-containing RNA-binding. Phosphorylated at Ser-54, Ser-92 and Ser-203 by MAPKAPK2; these phosphorylations increase the association with 14-3-3 proteins and mediate ARE-containing mRNA stabilization in a protein kinase AKT1-independent manner. MAPKAPK2-mediated phosphorylations at Ser-54, Ser-92 and Ser-203 do not impair ARE-containing RNA-binding. Phosphorylations increase the association with 14-3-3 proteins and mediate ARE-containing mRNA stabilization during early adipogenesis in a p38 MAPK- and AKT-dependent manner. Ubiquitinated. Ubiquitination leads to proteasomal degradation, a process inhibited by phosphorylations at Ser-90, Ser-92 and Ser-203. As to expression, expressed in preadipocytes and adipocytes. Expressed in the proximal and distal tubules in the renal cortex (at protein level). Expressed in ovary, heart, kidney, lung, spleen and thymus. Weakly expressed in brain, liver and testis. Expressed in osteoblasts. Expressed in embryonic stem cells (ESCs). Expressed through B lymphocyte development.

Its subcellular location is the nucleus. The protein localises to the cytoplasm. It localises to the cytoplasmic granule. The protein resides in the P-body. In terms of biological role, zinc-finger RNA-binding protein that destabilizes several cytoplasmic AU-rich element (ARE)-containing mRNA transcripts by promoting their poly(A) tail removal or deadenylation, and hence provide a mechanism for attenuating protein synthesis. Acts as a 3'-untranslated region (UTR) ARE mRNA-binding adapter protein to communicate signaling events to the mRNA decay machinery. Functions by recruiting the CCR4-NOT deadenylating complex and components of the cytoplasmic RNA decay machinery to the bound ARE-containing mRNAs, and hence promotes ARE-mediated mRNA deadenylation and decay processes. Also induces the degradation of ARE-containing mRNAs even in absence of poly(A) tail. Binds to 3'-UTR ARE of numerous mRNAs. Positively regulates early adipogenesis by promoting ARE-mediated mRNA decay of immediate early genes (IEGs). Promotes ARE-mediated mRNA decay of mineralocorticoid receptor NR3C2 mRNA in response to hypertonic stress. Negatively regulates hematopoietic/erythroid cell differentiation by promoting ARE-mediated mRNA decay of the transcription factor STAT5B mRNA. Positively regulates monocyte/macrophage cell differentiation by promoting ARE-mediated mRNA decay of the cyclin-dependent kinase CDK6 mRNA. Promotes degradation of ARE-containing pluripotency-associated mRNAs in embryonic stem cells (ESCs), such as NANOG, through a fibroblast growth factor (FGF)-induced MAPK-dependent signaling pathway, and hence attenuates ESC self-renewal and positively regulates mesendoderm differentiation. May play a role in mediating pro-apoptotic effects in malignant B-cells by promoting ARE-mediated mRNA decay of BCL2 mRNA. In association with ZFP36L2 maintains quiescence on developing B lymphocytes by promoting ARE-mediated decay of several mRNAs encoding cell cycle regulators that help B cells progress through the cell cycle, and hence ensuring accurate variable-diversity-joining (VDJ) recombination and functional immune cell formation. Together with ZFP36L2 is also necessary for thymocyte development and prevention of T-cell acute lymphoblastic leukemia (T-ALL) transformation by promoting ARE-mediated mRNA decay of the oncogenic transcription factor NOTCH1 mRNA. Involved in the delivery of target ARE-mRNAs to processing bodies (PBs). In addition to its cytosolic mRNA-decay function, plays a role in the regulation of nuclear mRNA 3'-end processing; modulates mRNA 3'-end maturation efficiency of the DLL4 mRNA through binding with an ARE embedded in a weak noncanonical polyadenylation (poly(A)) signal in endothelial cells. Also involved in the regulation of stress granule (SG) and P-body (PB) formation and fusion. Plays a role in vasculogenesis and endocardial development. Involved in the regulation of keratinocyte proliferation, differentiation and apoptosis. Plays a role in myoblast cell differentiation. The chain is mRNA decay activator protein ZFP36L1 from Mus musculus (Mouse).